The sequence spans 89 residues: Small ribosomal subunit protein uS15 (89 aa).

The protein belongs to the universal ribosomal protein uS15 family. As to quaternary structure, part of the 30S ribosomal subunit. Forms a bridge to the 50S subunit in the 70S ribosome, contacting the 23S rRNA.

Functionally, one of the primary rRNA binding proteins, it binds directly to 16S rRNA where it helps nucleate assembly of the platform of the 30S subunit by binding and bridging several RNA helices of the 16S rRNA. Forms an intersubunit bridge (bridge B4) with the 23S rRNA of the 50S subunit in the ribosome. The sequence is that of Small ribosomal subunit protein uS15 from Erwinia tasmaniensis (strain DSM 17950 / CFBP 7177 / CIP 109463 / NCPPB 4357 / Et1/99).